The sequence spans 98 residues: UPF0251 protein Sbal_3699 (98 aa).

The protein belongs to the UPF0251 family.

In Shewanella baltica (strain OS155 / ATCC BAA-1091), this protein is UPF0251 protein Sbal_3699.